The following is a 106-amino-acid chain: Immunoglobulin lambda constant 2 (106 aa).

The region spanning 7–101 (PSVTLFPPSS…EGSTVEKTVA (95 aa)) is the Ig-like domain. Residues Cys-28 and Cys-87 are joined by a disulfide bond.

As to quaternary structure, immunoglobulins are composed of two identical heavy chains and two identical light chains; disulfide-linked.

It is found in the secreted. Its subcellular location is the cell membrane. Functionally, constant region of immunoglobulin light chains. Immunoglobulins, also known as antibodies, are membrane-bound or secreted glycoproteins produced by B lymphocytes. In the recognition phase of humoral immunity, the membrane-bound immunoglobulins serve as receptors which, upon binding of a specific antigen, trigger the clonal expansion and differentiation of B lymphocytes into immunoglobulins-secreting plasma cells. Secreted immunoglobulins mediate the effector phase of humoral immunity, which results in the elimination of bound antigens. The antigen binding site is formed by the variable domain of one heavy chain, together with that of its associated light chain. Thus, each immunoglobulin has two antigen binding sites with remarkable affinity for a particular antigen. The variable domains are assembled by a process called V-(D)-J rearrangement and can then be subjected to somatic hypermutations which, after exposure to antigen and selection, allow affinity maturation for a particular antigen. The chain is Immunoglobulin lambda constant 2 from Homo sapiens (Human).